The chain runs to 118 residues: Basic leucine zipper transcriptional factor ATF-like 3 (118 aa).

A disordered region spans residues 1–69 (MSQGPPAVSV…HESLEQENSV (69 aa)). 2 positions are modified to phosphoserine: serine 2 and serine 24. The bZIP domain occupies 28-91 (DDRKVRRREK…RHLSEVLKEH (64 aa)). The interval 30 to 55 (RKVRRREKNRVAAQRSRKKQTQKADK) is basic motif. Over residues 51-69 (QKADKLHEEHESLEQENSV) the composition is skewed to basic and acidic residues. The tract at residues 56 to 84 (LHEEHESLEQENSVLRREISKLKEELRHL) is leucine-zipper.

It belongs to the bZIP family. Heterodimer; heterodimerizes with JUN family proteins. Interacts with JUN. Highly expressed in CD8-alpha(+) classical dendritic cells (cDCs), with low to absent expression in other immune cells and non-immune tissues.

The protein resides in the nucleus. In terms of biological role, AP-1 family transcription factor that controls the differentiation of CD8(+) thymic conventional dendritic cells in the immune system. Acts via the formation of a heterodimer with JUN family proteins that recognizes and binds DNA sequence 5'-TGA[CG]TCA-3' and regulates expression of target genes. Required for development of CD8-alpha(+) classical dendritic cells (cDCs) and related CD103(+) dendritic cells that cross-present antigens to CD8 T-cells and produce interleukin-12 (IL12) in response to pathogens. In Mus musculus (Mouse), this protein is Basic leucine zipper transcriptional factor ATF-like 3 (Batf3).